Consider the following 382-residue polypeptide: Succinyl-diaminopimelate desuccinylase (382 aa).

Residue His72 coordinates Zn(2+). Residue Asp74 is part of the active site. Asp105 serves as a coordination point for Zn(2+). The active-site Proton acceptor is the Glu139. 3 residues coordinate Zn(2+): Glu140, Glu168, and His354.

This sequence belongs to the peptidase M20A family. DapE subfamily. In terms of assembly, homodimer. It depends on Zn(2+) as a cofactor. Requires Co(2+) as cofactor.

It carries out the reaction N-succinyl-(2S,6S)-2,6-diaminopimelate + H2O = (2S,6S)-2,6-diaminopimelate + succinate. Its pathway is amino-acid biosynthesis; L-lysine biosynthesis via DAP pathway; LL-2,6-diaminopimelate from (S)-tetrahydrodipicolinate (succinylase route): step 3/3. In terms of biological role, catalyzes the hydrolysis of N-succinyl-L,L-diaminopimelic acid (SDAP), forming succinate and LL-2,6-diaminopimelate (DAP), an intermediate involved in the bacterial biosynthesis of lysine and meso-diaminopimelic acid, an essential component of bacterial cell walls. The protein is Succinyl-diaminopimelate desuccinylase of Shewanella amazonensis (strain ATCC BAA-1098 / SB2B).